The primary structure comprises 306 residues: Polyisoprenyl-teichoic acid--peptidoglycan teichoic acid transferase TagU (306 aa).

The Cytoplasmic segment spans residues 1-11 (MRAEKRKKKKK). The helical; Signal-anchor for type II membrane protein transmembrane segment at 12–32 (ILYTIIALIGIFVLSTGSYAY) threads the bilayer. The Extracellular segment spans residues 33-306 (YLWHKAASTV…TAELKESLNK (274 aa)).

Belongs to the LytR/CpsA/Psr (LCP) family.

Its subcellular location is the cell membrane. Its pathway is cell wall biogenesis. Functionally, may catalyze the final step in cell wall teichoic acid biosynthesis, the transfer of the anionic cell wall polymers (APs) from their lipid-linked precursor to the cell wall peptidoglycan (PG). The protein is Polyisoprenyl-teichoic acid--peptidoglycan teichoic acid transferase TagU of Bacillus licheniformis (strain ATCC 14580 / DSM 13 / JCM 2505 / CCUG 7422 / NBRC 12200 / NCIMB 9375 / NCTC 10341 / NRRL NRS-1264 / Gibson 46).